We begin with the raw amino-acid sequence, 84 residues long: N.vectensis toxin 5 (84 aa).

The first 21 residues, 1-21 (MNSLLKVAVVCLVMLVACSSG), serve as a signal peptide directing secretion. Intrachain disulfides connect cysteine 45–cysteine 77, cysteine 47–cysteine 68, and cysteine 61–cysteine 78.

In terms of tissue distribution, expressed in ectodermal gland cells. In adult female tissues, highly transcribed in mesenteries (gametes-producing tissue) and slightly transcribed in tentacles, pharynx and physa.

Functionally, has toxic effects on zebrafish larvae. It causes contractile paralysis and twitching of the tail within 20 minutes, followed by death within 30 minutes. Does not show any toxicity when injected into arthropods (cherry shrimps or grass shrimps). This Nematostella vectensis (Starlet sea anemone) protein is N.vectensis toxin 5.